A 296-amino-acid chain; its full sequence is Nucleotide-binding protein Pnec_1620 (296 aa).

8-15 contacts ATP; the sequence is GISGSGKS. 57-60 contributes to the GTP binding site; it reads DARR.

The protein belongs to the RapZ-like family.

In terms of biological role, displays ATPase and GTPase activities. This Polynucleobacter necessarius subsp. necessarius (strain STIR1) protein is Nucleotide-binding protein Pnec_1620.